A 485-amino-acid polypeptide reads, in one-letter code: Probable outer membrane usher protein LpfC' (485 aa).

The protein belongs to the fimbrial export usher family.

It localises to the cell outer membrane. Its function is as follows. Part of the lpfABCC'DE fimbrial operon. LP fimbriae may participate in the interaction with eukaryotic cells by assisting in microcolony formation. Could be involved in the export and assembly of the fimbrial subunits across the outer membrane. The chain is Probable outer membrane usher protein LpfC' (lpfC') from Escherichia coli O157:H7.